The chain runs to 755 residues: Putative two-component response regulator-like APRR6 (755 aa).

In terms of domain architecture, Response regulatory spans serine 14–phenylalanine 128.

The protein belongs to the ARR-like family.

The protein localises to the nucleus. The polypeptide is Putative two-component response regulator-like APRR6 (APRR6) (Arabidopsis thaliana (Mouse-ear cress)).